Reading from the N-terminus, the 217-residue chain is Adenylate kinase (217 aa).

10-15 (GAGKGT) is an ATP binding site. Positions 30–59 (STGDLFRANISQQTELGKLAKSYMNAGNLV) are NMP. AMP-binding positions include Thr-31, Arg-36, 57–59 (NLV), 85–88 (GFPR), and Gln-92. Positions 126–164 (GRRVCRNEPKHVFHVTYTPPKKEGVCDVCGGELYQRDDD) are LID. ATP contacts are provided by residues Arg-127 and 137–138 (VF). AMP-binding residues include Arg-161 and Arg-172. Gly-200 provides a ligand contact to ATP.

The protein belongs to the adenylate kinase family. As to quaternary structure, monomer.

It localises to the cytoplasm. The catalysed reaction is AMP + ATP = 2 ADP. It functions in the pathway purine metabolism; AMP biosynthesis via salvage pathway; AMP from ADP: step 1/1. Its function is as follows. Catalyzes the reversible transfer of the terminal phosphate group between ATP and AMP. Plays an important role in cellular energy homeostasis and in adenine nucleotide metabolism. This is Adenylate kinase from Streptomyces coelicolor (strain ATCC BAA-471 / A3(2) / M145).